Here is a 258-residue protein sequence, read N- to C-terminus: Acetylglutamate kinase (258 aa).

Substrate contacts are provided by residues 44-45 (GG), arginine 66, and asparagine 158. ATP contacts are provided by residues 181-186 (DISSIL) and 209-211 (IIT).

Belongs to the acetylglutamate kinase family. ArgB subfamily. As to quaternary structure, homodimer.

It is found in the cytoplasm. It catalyses the reaction N-acetyl-L-glutamate + ATP = N-acetyl-L-glutamyl 5-phosphate + ADP. Its pathway is amino-acid biosynthesis; L-arginine biosynthesis; N(2)-acetyl-L-ornithine from L-glutamate: step 2/4. In terms of biological role, catalyzes the ATP-dependent phosphorylation of N-acetyl-L-glutamate. The polypeptide is Acetylglutamate kinase (Buchnera aphidicola subsp. Schizaphis graminum (strain Sg)).